A 667-amino-acid chain; its full sequence is DNA ligase (667 aa).

NAD(+) contacts are provided by residues 30 to 34 (DSEYD), 79 to 80 (SL), and glutamate 112. Lysine 114 (N6-AMP-lysine intermediate) is an active-site residue. Residues arginine 135, glutamate 172, lysine 289, and lysine 313 each coordinate NAD(+). Cysteine 407, cysteine 410, cysteine 425, and cysteine 431 together coordinate Zn(2+). In terms of domain architecture, BRCT spans 590–667 (VRDNPLKGKT…SENEFLALLA (78 aa)).

It belongs to the NAD-dependent DNA ligase family. LigA subfamily. Requires Mg(2+) as cofactor. It depends on Mn(2+) as a cofactor.

It catalyses the reaction NAD(+) + (deoxyribonucleotide)n-3'-hydroxyl + 5'-phospho-(deoxyribonucleotide)m = (deoxyribonucleotide)n+m + AMP + beta-nicotinamide D-nucleotide.. In terms of biological role, DNA ligase that catalyzes the formation of phosphodiester linkages between 5'-phosphoryl and 3'-hydroxyl groups in double-stranded DNA using NAD as a coenzyme and as the energy source for the reaction. It is essential for DNA replication and repair of damaged DNA. This chain is DNA ligase, found in Histophilus somni (strain 2336) (Haemophilus somnus).